The chain runs to 75 residues: Small ribosomal subunit protein bS18 (75 aa).

The protein belongs to the bacterial ribosomal protein bS18 family. Part of the 30S ribosomal subunit. Forms a tight heterodimer with protein bS6.

Its function is as follows. Binds as a heterodimer with protein bS6 to the central domain of the 16S rRNA, where it helps stabilize the platform of the 30S subunit. In Clostridioides difficile (strain 630) (Peptoclostridium difficile), this protein is Small ribosomal subunit protein bS18.